Here is a 141-residue protein sequence, read N- to C-terminus: MWVLGIAATFCGLFWLPGLALQIQCYQCEEFQLNNDCSSPEFIVNCTVNVQDMCQKEVMEQSAGIMYRKSCASSAACLIASAGYQSFCSPGKLNSVCISCCNTPLCNGPRPKKRGSSASAIRPGLLTTLLFFHLALCLAHC.

The N-terminal stretch at 1-20 (MWVLGIAATFCGLFWLPGLA) is a signal peptide. Intrachain disulfides connect C25–C54, C28–C37, C46–C71, C77–C100, C88–C97, and C101–C106. The region spanning 25–107 (CYQCEEFQLN…ISCCNTPLCN (83 aa)) is the UPAR/Ly6 domain. A glycan (N-linked (GlcNAc...) asparagine) is linked at N45. A lipid anchor (GPI-anchor amidated glycine) is attached at G115. A propeptide spans 116 to 141 (SSASAIRPGLLTTLLFFHLALCLAHC) (removed in mature form).

Interacts with CHRNA4 and nAChRs containing alpha-4:beta-2 (CHRNA4:CHRNB2) and alpha-7 (CHRNA7) subunits. As to expression, preferentially expressed in the nervous system. Expressed in embryonic and postnatal postmitotic central and peripheral neurons including subpopulations of motor neurons, sensory neurons, interneurons and neurons of the autonomous nervous system. Expressed around the growing nerves in the limb bud. Expressed at high levels in specific brain regions such as the prefrontal cortex, amygdala, hippocampus, mediodorsal thalamus, dentate gyrus and specific brainstem nuclei (at protein level).

It localises to the cell membrane. Its function is as follows. Believed to act as a modulator of nicotinic acetylcholine receptors (nAChRs) activity. In vitro increases receptor desensitization and decreases affinity for ACh of alpha-4:beta-2-containing nAChRs. May play a role in the intracellular trafficking of alpha-4:beta-2 and alpha-7-containing nAChRs and may inhibit their expression at the cell surface. May be involved in the control of anxiety. The protein is Ly6/PLAUR domain-containing protein 1 (Lypd1) of Mus musculus (Mouse).